The sequence spans 346 residues: Glycerol-1-phosphate dehydrogenase [NAD(P)+] (346 aa).

NAD(+) contacts are provided by residues 93–97 (GSIID) and 115–118 (TTAS). Asp120 lines the substrate pocket. NAD(+) is bound at residue Ser124. Asp167 provides a ligand contact to substrate. The Zn(2+) site is built by Asp167 and His247. His251 contributes to the substrate binding site. His263 provides a ligand contact to Zn(2+).

This sequence belongs to the glycerol-1-phosphate dehydrogenase family. Zn(2+) serves as cofactor.

It is found in the cytoplasm. It carries out the reaction sn-glycerol 1-phosphate + NAD(+) = dihydroxyacetone phosphate + NADH + H(+). The catalysed reaction is sn-glycerol 1-phosphate + NADP(+) = dihydroxyacetone phosphate + NADPH + H(+). Its pathway is membrane lipid metabolism; glycerophospholipid metabolism. Its function is as follows. Catalyzes the NAD(P)H-dependent reduction of dihydroxyacetonephosphate (DHAP or glycerone phosphate) to glycerol 1-phosphate (G1P). The G1P thus generated is used as the glycerophosphate backbone of phospholipids in the cellular membranes of Archaea. This is Glycerol-1-phosphate dehydrogenase [NAD(P)+] from Pyrococcus horikoshii (strain ATCC 700860 / DSM 12428 / JCM 9974 / NBRC 100139 / OT-3).